An 861-amino-acid polypeptide reads, in one-letter code: Bifunctional uridylyltransferase/uridylyl-removing enzyme (861 aa).

Residues 1-321 are uridylyltransferase; the sequence is MKNDNRIIKN…VYHQKQKIIR (321 aa). Residues 322–678 form a uridylyl-removing region; sequence LDDEFQLSNR…IMPHHSQGGT (357 aa). Residues 440-562 form the HD domain; the sequence is VDQHTLFVIR…LPHARYLDYL (123 aa). ACT domains are found at residues 679-760 and 788-861; these read EVFI…AVSR and QLFL…KSKY.

Belongs to the GlnD family. Mg(2+) is required as a cofactor.

It carries out the reaction [protein-PII]-L-tyrosine + UTP = [protein-PII]-uridylyl-L-tyrosine + diphosphate. The enzyme catalyses [protein-PII]-uridylyl-L-tyrosine + H2O = [protein-PII]-L-tyrosine + UMP + H(+). Uridylyltransferase (UTase) activity is inhibited by glutamine, while glutamine activates uridylyl-removing (UR) activity. Functionally, modifies, by uridylylation and deuridylylation, the PII regulatory proteins (GlnB and homologs), in response to the nitrogen status of the cell that GlnD senses through the glutamine level. Under low glutamine levels, catalyzes the conversion of the PII proteins and UTP to PII-UMP and PPi, while under higher glutamine levels, GlnD hydrolyzes PII-UMP to PII and UMP (deuridylylation). Thus, controls uridylylation state and activity of the PII proteins, and plays an important role in the regulation of nitrogen assimilation and metabolism. This chain is Bifunctional uridylyltransferase/uridylyl-removing enzyme, found in Legionella pneumophila subsp. pneumophila (strain Philadelphia 1 / ATCC 33152 / DSM 7513).